The following is a 258-amino-acid chain: tRNA pseudouridine synthase A (258 aa).

The active-site Nucleophile is the D52. Y110 is a substrate binding site.

It belongs to the tRNA pseudouridine synthase TruA family. In terms of assembly, homodimer.

It carries out the reaction uridine(38/39/40) in tRNA = pseudouridine(38/39/40) in tRNA. In terms of biological role, formation of pseudouridine at positions 38, 39 and 40 in the anticodon stem and loop of transfer RNAs. The polypeptide is tRNA pseudouridine synthase A (Francisella tularensis subsp. mediasiatica (strain FSC147)).